A 718-amino-acid polypeptide reads, in one-letter code: Serine/threonine-protein kinase PAK 5 (718 aa).

Disordered regions lie at residues 1-29 (MFGK…DPQE), 96-119 (RSNS…IQGH), 226-245 (SPLD…TSRC), 264-296 (YDRR…QEPM), and 339-371 (VFSP…SSSH). One can recognise a CRIB domain in the interval 11–24 (ISGPSNFEHRVHTG). The segment at 25–447 (FDPQEQKFTG…VVSPGDPREY (423 aa)) is linker. S104 is modified (phosphoserine). The residue at position 107 (T107) is a Phosphothreonine. A compositionally biased stretch (polar residues) spans 226–244 (SPLDYSFQLTPSRTAGTSR). Residues 359–371 (QSQSKVGYSSSSH) are compositionally biased toward low complexity. The Protein kinase domain occupies 448–699 (LDNFIKIGEG…AQELLGHPFL (252 aa)). ATP is bound by residues 454–462 (IGEGSTGIV) and K477. D567 functions as the Proton acceptor in the catalytic mechanism.

Belongs to the protein kinase superfamily. STE Ser/Thr protein kinase family. STE20 subfamily. In terms of assembly, interacts tightly with GTP-bound but not GDP-bound CDC42/p21 and RAC1. Interacts with MARK2, leading to inhibit MARK2 independently of kinase activity. Interacts with RHOD and RHOH. Post-translationally, autophosphorylated when activated by CDC42/p21.

The protein localises to the mitochondrion. The protein resides in the cytoplasm. It localises to the nucleus. It catalyses the reaction L-seryl-[protein] + ATP = O-phospho-L-seryl-[protein] + ADP + H(+). The enzyme catalyses L-threonyl-[protein] + ATP = O-phospho-L-threonyl-[protein] + ADP + H(+). Serine/threonine protein kinase that plays a role in a variety of different signaling pathways including cytoskeleton regulation, cell migration, proliferation or cell survival. Activation by various effectors including growth factor receptors or active CDC42 and RAC1 results in a conformational change and a subsequent autophosphorylation on several serine and/or threonine residues. Phosphorylates the proto-oncogene RAF and stimulates its kinase activity. Promotes cell survival by phosphorylating the BCL2 antagonist of cell death BAD. Phosphorylates CTNND1, probably to regulate cytoskeletal organization and cell morphology. Keeps microtubules stable through MARK2 inhibition and destabilizes the F-actin network leading to the disappearance of stress fibers and focal adhesions. The chain is Serine/threonine-protein kinase PAK 5 (Pak5) from Rattus norvegicus (Rat).